Reading from the N-terminus, the 102-residue chain is Vacuolar ATPase assembly integral membrane protein VMA21 homolog (102 aa).

At 1–33 (MTTSSSSEPSTMATLFPNFRDQEVQSAVKNLLT) the chain is on the cytoplasmic side. A helical membrane pass occupies residues 34–54 (YSLVILIVPLASMFLLKQFFF). The Lumenal segment spans residues 55–67 (EGLLGVSANDALT). Residues 68-88 (YSAIIAVVLVHVVLGIWLFAA) form a helical membrane-spanning segment. Topologically, residues 89-102 (TKQEDRKKRENKQD) are cytoplasmic.

The protein belongs to the VMA21 family.

It localises to the endoplasmic reticulum membrane. The protein resides in the endoplasmic reticulum-Golgi intermediate compartment membrane. Its subcellular location is the cytoplasmic vesicle. It is found in the COPII-coated vesicle membrane. Required for the assembly of the V0 complex of the vacuolar ATPase (V-ATPase) in the endoplasmic reticulum. This Caenorhabditis elegans protein is Vacuolar ATPase assembly integral membrane protein VMA21 homolog.